A 370-amino-acid polypeptide reads, in one-letter code: Protein phosphatase 2C homolog 2 (370 aa).

The PPM-type phosphatase domain maps to 23-291; it reads HFGVSHMQGW…DNMTICIVAF (269 aa). Residues D63, G64, D233, and D282 each contribute to the Mn(2+) site. Phosphoserine occurs at positions 355 and 357.

Belongs to the PP2C family. In terms of assembly, monomer. It depends on Mg(2+) as a cofactor. Mn(2+) serves as cofactor.

Its subcellular location is the nucleus. It is found in the cytoplasm. It localises to the cytosol. The enzyme catalyses O-phospho-L-seryl-[protein] + H2O = L-seryl-[protein] + phosphate. The catalysed reaction is O-phospho-L-threonyl-[protein] + H2O = L-threonyl-[protein] + phosphate. Its activity is regulated as follows. Activity is reduced when phosphosrylated at Ser-355/Ser-357. Dephosphorylating regulator for many key proteins. Has an important role in osmotic stability and cell shape control. It may negatively regulate the osmosensing signal transmitted through wis1 map kinase. The polypeptide is Protein phosphatase 2C homolog 2 (ptc2) (Schizosaccharomyces pombe (strain 972 / ATCC 24843) (Fission yeast)).